A 1450-amino-acid polypeptide reads, in one-letter code: ABC transporter G family member 37 (1450 aa).

The region spanning Gly-158 to Ala-431 is the ABC transporter 1 domain. Gly-191–Thr-198 contributes to the ATP binding site. One can recognise an ABC transmembrane type-2 1 domain in the interval Glu-509–Phe-721. A run of 6 helical transmembrane segments spans residues Phe-527–Phe-547, Gly-559–Ala-579, Ile-614–Phe-634, Leu-646–Gly-666, Val-670–Ile-690, and Ile-756–Leu-776. The region spanning Ile-852–Asp-1104 is the ABC transporter 2 domain. Gly-897–Thr-904 contacts ATP. The 215-residue stretch at Thr-1177–Phe-1391 folds into the ABC transmembrane type-2 2 domain. A run of 7 helical transmembrane segments spans residues Ala-1198–Leu-1218, Tyr-1236–Val-1256, Leu-1284–Phe-1304, Phe-1311–Met-1331, Ile-1341–Ile-1361, Trp-1372–Gly-1392, and Val-1422–Ile-1442.

This sequence belongs to the ABC transporter superfamily. ABCG family. PDR (TC 3.A.1.205) subfamily.

It localises to the membrane. In terms of biological role, may be a general defense protein. In Oryza sativa subsp. japonica (Rice), this protein is ABC transporter G family member 37.